The primary structure comprises 31 residues: Cyclotide mden-L (31 aa).

The segment at residues 1–31 (GSIPCGESCVYIPCISAVLGCSCKNKVCYRN) is a cross-link (cyclopeptide (Gly-Asn)). 3 cysteine pairs are disulfide-bonded: C5-C21, C9-C23, and C14-C28.

This sequence belongs to the cyclotide family. Bracelet subfamily. This is a cyclic peptide.

Probably participates in a plant defense mechanism. This chain is Cyclotide mden-L, found in Melicytus dentatus (Tree violet).